The sequence spans 1051 residues: Helicase POLQ-like (1051 aa).

The segment covering 1–10 (MANKHNLCKK) has biased composition (basic residues). Disordered regions lie at residues 1-28 (MANKHNLCKKRSLDLSEESTSESHAKRQ) and 61-112 (LFGT…APTD). Composition is skewed to polar residues over residues 64–78 (TQATTSTNKMTQSGS) and 89–102 (SFPSAQSVPPNSAS). Residues 103–112 (KPDEASAPTD) are compositionally biased toward basic and acidic residues. Residues 274 to 446 (LPAIRQRKNL…FLNADVYTRG (173 aa)) form the Helicase ATP-binding domain. Residue 287–294 (LPTSGGKT) coordinates ATP. A DEAH box motif is present at residues 391 to 394 (DELH). The 193-residue stretch at 497–689 (HLAGLISECA…NEAVGLQSLI (193 aa)) folds into the Helicase C-terminal domain.

Belongs to the helicase family. SKI2 subfamily.

The protein localises to the nucleus. The protein resides in the chromosome. It carries out the reaction Couples ATP hydrolysis with the unwinding of duplex DNA by translocating in the 3'-5' direction.. The enzyme catalyses ATP + H2O = ADP + phosphate + H(+). Functionally, single-stranded 3'-5' DNA helicase that plays a key role in homology-driven double-strand break (DSB) repair. Involved in different DSB repair mechanisms that are guided by annealing of extensive stretches of complementary bases at break ends, such as microhomology-mediated end-joining (MMEJ), single-strand annealing (SSA) or synthesis-dependent strand annealing (SDSA). The polypeptide is Helicase POLQ-like (Drosophila melanogaster (Fruit fly)).